Here is a 264-residue protein sequence, read N- to C-terminus: Apolipoprotein A-I (264 aa).

A signal peptide spans 1 to 18 (MKAVVLTVAVFFLTGSQA). A run of 2 repeats spans residues 67 to 88 (LKLL…EQIG) and 89 to 110 (PVTQ…QEMN). The segment at 67–264 (LKLLDNWDSL…DEATKKLTTQ (198 aa)) is 10 X approximate tandem repeats. Methionine 109 is modified (methionine sulfoxide). A 3; half-length repeat occupies 111–121 (KDLEEVKLKVQ). 3 tandem repeats follow at residues 122–143 (PYLD…QQVE), 144–165 (PLGT…EKLS), and 166–187 (PLGQ…THLA). One copy of the 7; truncated repeat lies at 188-207 (PYSDELRQRLAARLEALKES). Repeat unit 8 spans residues 208 to 229 (SSLADYQAKATEHLSALGEKAK). One copy of the 9; half-length repeat lies at 230-240 (PALEDLRQGLL). Repeat 10 spans residues 241-264 (PVLENLKMSFWSAVDEATKKLTTQ).

The protein belongs to the apolipoprotein A1/A4/E family. As to quaternary structure, homodimer. Interacts with APOA1BP and CLU. Component of a sperm activating protein complex (SPAP), consisting of APOA1, an immunoglobulin heavy chain, an immunoglobulin light chain and albumin. Interacts with NDRG1. Interacts with SCGB3A2. Interacts with NAXE and YJEFN3. In terms of processing, glycosylated. Post-translationally, palmitoylated. Phosphorylation sites are present in the extracellular medium.

The protein localises to the secreted. Its function is as follows. Participates in the reverse transport of cholesterol from tissues to the liver for excretion by promoting cholesterol efflux from tissues and by acting as a cofactor for the lecithin cholesterol acyltransferase (LCAT). As part of the SPAP complex, activates spermatozoa motility. The protein is Apolipoprotein A-I (ApoA1) of Marmota monax (Woodchuck).